Consider the following 298-residue polypeptide: Probable tRNA(His) guanylyltransferase (298 aa).

Positions 58, 59, and 105 each coordinate Mg(2+). Residues 58-63 (DGRNFH) and 104-105 (SD) each bind GTP.

Belongs to the tRNA(His) guanylyltransferase family. Homotetramer. Interacts with MFN1 and MFN2; functions as a guanyl-nucleotide exchange factor/GEF for MFN2 and also probably MFN1. Mg(2+) serves as cofactor.

It is found in the cytoplasm. Its subcellular location is the mitochondrion. The catalysed reaction is a 5'-end ribonucleotide-tRNA(His) + GTP + ATP + H2O = a 5'-end phospho-guanosine-ribonucleotide-tRNA(His) + AMP + 2 diphosphate + H(+). Functionally, adds a GMP to the 5'-end of tRNA(His) after transcription and RNase P cleavage. This step is essential for proper recognition of the tRNA and for the fidelity of protein synthesis. Also functions as a guanyl-nucleotide exchange factor/GEF for the MFN1 and MFN2 mitofusins thereby regulating mitochondrial fusion. By regulating both mitochondrial dynamics and bioenergetic function, it contributes to cell survival following oxidative stress. The sequence is that of Probable tRNA(His) guanylyltransferase (THG1L) from Bos taurus (Bovine).